A 260-amino-acid polypeptide reads, in one-letter code: Hydroxyacylglutathione hydrolase (260 aa).

Zn(2+) contacts are provided by H61, H63, D65, H66, H119, D138, and H176.

This sequence belongs to the metallo-beta-lactamase superfamily. Glyoxalase II family. As to quaternary structure, monomer. The cofactor is Zn(2+).

It catalyses the reaction an S-(2-hydroxyacyl)glutathione + H2O = a 2-hydroxy carboxylate + glutathione + H(+). It participates in secondary metabolite metabolism; methylglyoxal degradation; (R)-lactate from methylglyoxal: step 2/2. Thiolesterase that catalyzes the hydrolysis of S-D-lactoyl-glutathione to form glutathione and D-lactic acid. This chain is Hydroxyacylglutathione hydrolase, found in Brucella anthropi (strain ATCC 49188 / DSM 6882 / CCUG 24695 / JCM 21032 / LMG 3331 / NBRC 15819 / NCTC 12168 / Alc 37) (Ochrobactrum anthropi).